The following is a 109-amino-acid chain: Large ribosomal subunit protein uL24 (109 aa).

This sequence belongs to the universal ribosomal protein uL24 family. In terms of assembly, part of the 50S ribosomal subunit.

Its function is as follows. One of two assembly initiator proteins, it binds directly to the 5'-end of the 23S rRNA, where it nucleates assembly of the 50S subunit. One of the proteins that surrounds the polypeptide exit tunnel on the outside of the subunit. The polypeptide is Large ribosomal subunit protein uL24 (Rickettsia africae (strain ESF-5)).